The sequence spans 50 residues: Sperm protamine P1 (50 aa).

2 cysteine pairs are disulfide-bonded: cysteine 7–cysteine 15 and cysteine 39–cysteine 47.

Belongs to the protamine P1 family. As to quaternary structure, cross-linked by interchain disulfide bonds around the DNA-helix. As to expression, testis.

Its subcellular location is the nucleus. The protein resides in the chromosome. In terms of biological role, protamines substitute for histones in the chromatin of sperm during the haploid phase of spermatogenesis. They compact sperm DNA into a highly condensed, stable and inactive complex. In Oryctolagus cuniculus (Rabbit), this protein is Sperm protamine P1 (PRM1).